A 166-amino-acid polypeptide reads, in one-letter code: Ubiquitin-fold modifier-conjugating enzyme 1 (166 aa).

Catalysis depends on cysteine 116, which acts as the Glycyl thioester intermediate.

This sequence belongs to the ubiquitin-conjugating enzyme family. UFC1 subfamily.

In terms of biological role, E2-like enzyme which forms an intermediate with UFM1 via a thioester linkage. The sequence is that of Ubiquitin-fold modifier-conjugating enzyme 1 from Monosiga brevicollis (Choanoflagellate).